The following is a 677-amino-acid chain: uncharacterized protein (677 aa).

A disordered region spans residues 1 to 87; that stretch reads MGRHSKPDPE…PTGAEPIAAA (87 aa). Over residues 17 to 29 the composition is skewed to basic and acidic residues; it reads SDGHAAEQQHWED. The segment covering 51–64 has biased composition (low complexity); that stretch reads GHYSAVGGYSASGS. 4 consecutive transmembrane segments (helical) span residues 115–135, 192–212, 313–333, and 474–494; these read VSIG…GVIL, VAVA…IGKW, EAVA…IGAV, and ATLA…IMLD.

The protein resides in the cell membrane. This is an uncharacterized protein from Mycobacterium tuberculosis (strain CDC 1551 / Oshkosh).